Reading from the N-terminus, the 460-residue chain is Argininosuccinate lyase (460 aa).

Belongs to the lyase 1 family. Argininosuccinate lyase subfamily.

The protein resides in the cytoplasm. The catalysed reaction is 2-(N(omega)-L-arginino)succinate = fumarate + L-arginine. It functions in the pathway amino-acid biosynthesis; L-arginine biosynthesis; L-arginine from L-ornithine and carbamoyl phosphate: step 3/3. The polypeptide is Argininosuccinate lyase (Oleidesulfovibrio alaskensis (strain ATCC BAA-1058 / DSM 17464 / G20) (Desulfovibrio alaskensis)).